A 111-amino-acid polypeptide reads, in one-letter code: Large ribosomal subunit protein bL21 (111 aa).

This sequence belongs to the bacterial ribosomal protein bL21 family. In terms of assembly, part of the 50S ribosomal subunit. Contacts protein L20.

Functionally, this protein binds to 23S rRNA in the presence of protein L20. The polypeptide is Large ribosomal subunit protein bL21 (Thermosynechococcus vestitus (strain NIES-2133 / IAM M-273 / BP-1)).